The sequence spans 181 residues: uncharacterized protein (181 aa).

This is an uncharacterized protein from Rickettsia prowazekii (strain Madrid E).